The sequence spans 426 residues: Mediator of RNA polymerase II transcription subunit 1 (426 aa).

The interval 324 to 356 (VGDAPAPAAQPPLHRRRSSNKGCRRASAAESAT) is disordered. A compositionally biased stretch (basic residues) spans 336-347 (LHRRRSSNKGCR).

It belongs to the Mediator complex subunit 1 family. As to quaternary structure, component of the Mediator complex.

Its subcellular location is the nucleus. Functionally, component of the Mediator complex, a coactivator involved in the regulated transcription of nearly all RNA polymerase II-dependent genes. Mediator functions as a bridge to convey information from gene-specific regulatory proteins to the basal RNA polymerase II transcription machinery. Mediator is recruited to promoters by direct interactions with regulatory proteins and serves as a scaffold for the assembly of a functional preinitiation complex with RNA polymerase II and the general transcription factors. The chain is Mediator of RNA polymerase II transcription subunit 1 (MED1) from Eremothecium gossypii (strain ATCC 10895 / CBS 109.51 / FGSC 9923 / NRRL Y-1056) (Yeast).